The primary structure comprises 339 residues: Non-homologous end joining protein Ku (339 aa).

The 178-residue stretch at 10 to 187 (ITFGLVNIPV…LPKATTGKPT (178 aa)) folds into the Ku domain. Disordered regions lie at residues 230–251 (DSGKTHQLTPPAEEEEAPRQGA) and 263–339 (SLGQ…KHAA). A compositionally biased stretch (basic and acidic residues) spans 267-277 (RGKEDKEDATP). A compositionally biased stretch (basic residues) spans 278 to 289 (ARRKAPARHAAA). Residues 290–310 (RKQPAAKRAATPPAKRASTAA) show a composition bias toward low complexity.

It belongs to the prokaryotic Ku family. Homodimer. Interacts with LigD.

In terms of biological role, with LigD forms a non-homologous end joining (NHEJ) DNA repair enzyme, which repairs dsDNA breaks with reduced fidelity. Binds linear dsDNA with 5'- and 3'- overhangs but not closed circular dsDNA nor ssDNA. Recruits and stimulates the ligase activity of LigD. The sequence is that of Non-homologous end joining protein Ku from Cupriavidus necator (strain ATCC 17699 / DSM 428 / KCTC 22496 / NCIMB 10442 / H16 / Stanier 337) (Ralstonia eutropha).